Consider the following 447-residue polypeptide: Dihydrolipoyllysine-residue acetyltransferase component of pyruvate dehydrogenase complex (447 aa).

The region spanning 2–78 is the Lipoyl-binding domain; sequence PINITMPALS…KVNALIAVLA (77 aa). N6-lipoyllysine is present on Lys-43. The tract at residues 91 to 140 is disordered; that stretch reads GNGAAGAVPAPKPKETAETAPAAAPAPAAAPAPQAAAPASPAPADGEGKR. Low complexity predominate over residues 108 to 134; it reads ETAPAAAPAPAAAPAPQAAAPASPAPA. The 38-residue stretch at 142 to 179 folds into the Peripheral subunit-binding (PSBD) domain; sequence FSSPLARRLAKEAGIDLSAIAGSGPHGRVVKKDVETAV. His-420 is an active-site residue.

It belongs to the 2-oxoacid dehydrogenase family. Forms a 24-polypeptide structural core with octahedral symmetry. The cofactor is (R)-lipoate.

The catalysed reaction is N(6)-[(R)-dihydrolipoyl]-L-lysyl-[protein] + acetyl-CoA = N(6)-[(R)-S(8)-acetyldihydrolipoyl]-L-lysyl-[protein] + CoA. In terms of biological role, the pyruvate dehydrogenase complex catalyzes the overall conversion of pyruvate to acetyl-CoA and CO(2). It contains multiple copies of three enzymatic components: pyruvate dehydrogenase (E1), dihydrolipoamide acetyltransferase (E2) and lipoamide dehydrogenase (E3). This is Dihydrolipoyllysine-residue acetyltransferase component of pyruvate dehydrogenase complex (pdhC) from Rhizobium meliloti (strain 1021) (Ensifer meliloti).